Consider the following 284-residue polypeptide: Bifunctional protein FolD (284 aa).

NADP(+) contacts are provided by residues 165–167 and serine 190; that span reads GRS.

Belongs to the tetrahydrofolate dehydrogenase/cyclohydrolase family. Homodimer.

The catalysed reaction is (6R)-5,10-methylene-5,6,7,8-tetrahydrofolate + NADP(+) = (6R)-5,10-methenyltetrahydrofolate + NADPH. The enzyme catalyses (6R)-5,10-methenyltetrahydrofolate + H2O = (6R)-10-formyltetrahydrofolate + H(+). The protein operates within one-carbon metabolism; tetrahydrofolate interconversion. Functionally, catalyzes the oxidation of 5,10-methylenetetrahydrofolate to 5,10-methenyltetrahydrofolate and then the hydrolysis of 5,10-methenyltetrahydrofolate to 10-formyltetrahydrofolate. The sequence is that of Bifunctional protein FolD from Streptococcus pyogenes serotype M28 (strain MGAS6180).